We begin with the raw amino-acid sequence, 246 residues long: MMQKCLSPKTLIAALVVLSACGRADHLGKAPSFTPNTESPEHVAMLWPGLPLHTQPQRSVDRASLWSGGQNSLLGDQRAMKKGDILTVVIEIDEKAEISNDTNRSRSGSESLGVPHLLGLPQRIDEKLPEGASMSNAVAVDSSSASGGKGSVKRKEKLTLRVAATVVDVLPNGVLSITGSQELRVNFELRELLVSGYVRPEDISRQNEITYDKIASARVSYGGRGQITDVQQPRYGQQVLDMVLPF.

Residues 1-20 form the signal peptide; sequence MMQKCLSPKTLIAALVVLSA. C21 is lipidated: N-palmitoyl cysteine. A lipid anchor (S-diacylglycerol cysteine) is attached at C21.

Belongs to the FlgH family. The basal body constitutes a major portion of the flagellar organelle and consists of four rings (L,P,S, and M) mounted on a central rod.

It is found in the cell outer membrane. It localises to the bacterial flagellum basal body. Assembles around the rod to form the L-ring and probably protects the motor/basal body from shearing forces during rotation. This is Flagellar L-ring protein from Ruegeria pomeroyi (strain ATCC 700808 / DSM 15171 / DSS-3) (Silicibacter pomeroyi).